The primary structure comprises 284 residues: MSANILDGKAIAANIRRNIKKRVQERITAGLRPPGLAVILLGSDPASQVYVRNKRRACEEVGFKSLAYDLPADTTQANLLALIDQLNADSTVDGILVQLPLGGHIDAEQVIEQIRPDKDVDGFHPYNIGRLTLRLPLLRPCTPHGVITLLRTTGQDLRGLEAVVVGASNIVGRPMMLELLLAGCTVTICHRWTRDLHKPISEADIVVAAVGKPHLIQGKWIKPGATVIDVGFTRQPDGTLTGDVEFESARQRALWITPVPGGVGPMTIATLLQNTLYATEKLHE.

An NADP(+)-binding site is contributed by 166 to 168 (GAS).

It belongs to the tetrahydrofolate dehydrogenase/cyclohydrolase family. As to quaternary structure, homodimer.

The enzyme catalyses (6R)-5,10-methylene-5,6,7,8-tetrahydrofolate + NADP(+) = (6R)-5,10-methenyltetrahydrofolate + NADPH. The catalysed reaction is (6R)-5,10-methenyltetrahydrofolate + H2O = (6R)-10-formyltetrahydrofolate + H(+). Its pathway is one-carbon metabolism; tetrahydrofolate interconversion. Its function is as follows. Catalyzes the oxidation of 5,10-methylenetetrahydrofolate to 5,10-methenyltetrahydrofolate and then the hydrolysis of 5,10-methenyltetrahydrofolate to 10-formyltetrahydrofolate. The sequence is that of Bifunctional protein FolD from Nitrosococcus oceani (strain ATCC 19707 / BCRC 17464 / JCM 30415 / NCIMB 11848 / C-107).